The primary structure comprises 161 residues: NADH:FMN oxidoreductase (161 aa).

FMN contacts are provided by residues Asp-30, 37 to 40, 54 to 61, Ala-88, Arg-94, and Phe-151; these read AAST and CVQNSSTT.

It belongs to the non-flavoprotein flavin reductase family.

Its subcellular location is the cytoplasm. The enzyme catalyses FMNH2 + NAD(+) = FMN + NADH + 2 H(+). It catalyses the reaction FADH2 + NAD(+) = FAD + NADH + 2 H(+). The protein operates within sulfur metabolism; dibenzothiophene degradation. In terms of biological role, an NADH:FMN oxidoreductase which supplies reduced FMN for the '4S' desulfurization pathway that removes covalently bound sulfur from dibenzothiophene (DBT) without breaking carbon-carbon bonds. Can also use FAD. Provides DszC and probably also DszA (DBT-monooxygenase and DBTO2-monooxygenase respectively) with reduced flavin (FMN and/or FAD). The protein is NADH:FMN oxidoreductase of Mycolicibacterium goodii (Mycobacterium goodii).